The chain runs to 269 residues: ATP synthase subunit gamma, mitochondrial (269 aa).

In terms of assembly, F-type ATP synthases have 2 components, the catalytic core F(1) and the membrane-embedded component F(0), linked together by a central stalk and a peripheral stalk. The central stalk, also called rotor shaft, is often seen as part of F(1). The peripheral stalk is seen as part of F(0). F(0) contains the membrane channel next to the rotor. F-type ATP synthases form dimers but each monomer functions independently in ATP generation. The dimer consists of 18 different polypeptides: ATP1 (subunit alpha, part of F(1), 3 molecules per monomer), ATP2 (subunit beta, part of F(1), 3 molecules per monomer), ATP3 (subunit gamma, part of the central stalk), ATP4 (subunit b, part of the peripheral stalk), ATP5/OSCP (subunit 5/OSCP, part of the peripheral stalk), ATP6 (subunit a, part of the peripheral stalk), ATP7 (subunit d, part of the peripheral stalk), ATP8 (subunit 8, part of the peripheral stalk), OLI1 (subunit c, part of the rotor, 10 molecules per monomer), ATP14 (subunit h, part of the peripheral stalk), ATP15 (subunit epsilon, part of the central stalk), ATP16 (subunit delta, part of the central stalk), ATP17 (subunit f, part of the peripheral stalk), ATP18 (subunit i/j, part of the peripheral stalk). Dimer-specific subunits are ATP19 (subunit k, at interface between monomers), ATP20 (subunit g, at interface between monomers), TIM11 (subunit e, at interface between monomers). Also contains subunit L.

Its subcellular location is the mitochondrion inner membrane. Functionally, mitochondrial membrane ATP synthase (F(1)F(0) ATP synthase or Complex V) produces ATP from ADP in the presence of a proton gradient across the membrane which is generated by electron transport complexes of the respiratory chain. F-type ATP synthases consist of two structural domains, F(1) - containing the extramembraneous catalytic core, and F(0) - containing the membrane proton channel, linked together by a central stalk and a peripheral stalk. During catalysis, ATP synthesis in the catalytic domain of F(1) is coupled via a rotary mechanism of the central stalk subunits to proton translocation. Part of the complex F(1) domain and the central stalk which is part of the complex rotary element. The gamma/ATP3 subunit protrudes into the catalytic domain formed of alpha/ATP1(3)beta/ATP2(3). Rotation of the central stalk against the surrounding alpha/ATP1(3)beta/ATP2(3) subunits leads to hydrolysis of ATP in three separate catalytic sites on the beta/ATP2 subunits. This is ATP synthase subunit gamma, mitochondrial from Pichia angusta (Yeast).